Here is a 248-residue protein sequence, read N- to C-terminus: 3-deoxy-manno-octulosonate cytidylyltransferase (248 aa).

It belongs to the KdsB family.

It localises to the cytoplasm. The catalysed reaction is 3-deoxy-alpha-D-manno-oct-2-ulosonate + CTP = CMP-3-deoxy-beta-D-manno-octulosonate + diphosphate. Its pathway is nucleotide-sugar biosynthesis; CMP-3-deoxy-D-manno-octulosonate biosynthesis; CMP-3-deoxy-D-manno-octulosonate from 3-deoxy-D-manno-octulosonate and CTP: step 1/1. It functions in the pathway bacterial outer membrane biogenesis; lipopolysaccharide biosynthesis. In terms of biological role, activates KDO (a required 8-carbon sugar) for incorporation into bacterial lipopolysaccharide in Gram-negative bacteria. This is 3-deoxy-manno-octulosonate cytidylyltransferase from Erwinia tasmaniensis (strain DSM 17950 / CFBP 7177 / CIP 109463 / NCPPB 4357 / Et1/99).